The primary structure comprises 168 residues: CDP-archaeol synthase (168 aa).

5 helical membrane-spanning segments follow: residues 7–27, 55–75, 80–100, 109–129, and 130–150; these read PLES…PVLL, GLAT…SATC, YAAG…GAFI, GAPA…LALY, and AAGY…VIAL.

This sequence belongs to the CDP-archaeol synthase family. Mg(2+) serves as cofactor.

The protein resides in the cell membrane. The enzyme catalyses 2,3-bis-O-(geranylgeranyl)-sn-glycerol 1-phosphate + CTP + H(+) = CDP-2,3-bis-O-(geranylgeranyl)-sn-glycerol + diphosphate. Its pathway is membrane lipid metabolism; glycerophospholipid metabolism. Catalyzes the formation of CDP-2,3-bis-(O-geranylgeranyl)-sn-glycerol (CDP-archaeol) from 2,3-bis-(O-geranylgeranyl)-sn-glycerol 1-phosphate (DGGGP) and CTP. This reaction is the third ether-bond-formation step in the biosynthesis of archaeal membrane lipids. This Hyperthermus butylicus (strain DSM 5456 / JCM 9403 / PLM1-5) protein is CDP-archaeol synthase.